Here is a 446-residue protein sequence, read N- to C-terminus: Tubulin beta-2 chain (446 aa).

8 residues coordinate GTP: glutamine 11, glutamate 69, serine 138, glycine 142, threonine 143, glycine 144, asparagine 204, and asparagine 226. Residue glutamate 69 participates in Mg(2+) binding. Residues 424 to 446 (QYQEATADEEGEFDEDEEGGGDE) form a disordered region. Positions 429 to 446 (TADEEGEFDEDEEGGGDE) are enriched in acidic residues.

It belongs to the tubulin family. Dimer of alpha and beta chains. A typical microtubule is a hollow water-filled tube with an outer diameter of 25 nm and an inner diameter of 15 nM. Alpha-beta heterodimers associate head-to-tail to form protofilaments running lengthwise along the microtubule wall with the beta-tubulin subunit facing the microtubule plus end conferring a structural polarity. Microtubules usually have 13 protofilaments but different protofilament numbers can be found in some organisms and specialized cells. Mg(2+) is required as a cofactor. In terms of tissue distribution, testis specific.

It is found in the cytoplasm. The protein resides in the cytoskeleton. In terms of biological role, tubulin is the major constituent of microtubules, a cylinder consisting of laterally associated linear protofilaments composed of alpha- and beta-tubulin heterodimers. Microtubules grow by the addition of GTP-tubulin dimers to the microtubule end, where a stabilizing cap forms. Below the cap, tubulin dimers are in GDP-bound state, owing to GTPase activity of alpha-tubulin. In Drosophila melanogaster (Fruit fly), this protein is Tubulin beta-2 chain (betaTub85D).